The chain runs to 476 residues: Protein DETOXIFICATION 17 (476 aa).

A run of 12 helical transmembrane segments spans residues 29 to 51 (LWLS…ISVM), 70 to 90 (FASV…ETLC), 111 to 131 (FVLL…EQIL), 140 to 160 (IASV…AYGL), 177 to 197 (VFVC…LFVL), 205 to 225 (GAAL…SCYV), 252 to 272 (IAFP…LLVL), 286 to 306 (VLSI…GLGG), 326 to 346 (LAVY…VTVL), 363 to 383 (IIAY…LDGL), 405 to 425 (LGSY…HFHI), and 431 to 451 (WLGI…VTIF).

This sequence belongs to the multi antimicrobial extrusion (MATE) (TC 2.A.66.1) family.

The protein resides in the membrane. This Arabidopsis thaliana (Mouse-ear cress) protein is Protein DETOXIFICATION 17.